The following is a 175-amino-acid chain: 6,7-dimethyl-8-ribityllumazine synthase (175 aa).

5-amino-6-(D-ribitylamino)uracil-binding positions include Phe24, 58–60 (ALE), and 82–84 (AVI). 87–88 (ET) provides a ligand contact to (2S)-2-hydroxy-3-oxobutyl phosphate. The Proton donor role is filled by His90. 5-amino-6-(D-ribitylamino)uracil is bound at residue Asn115. Residue Arg129 coordinates (2S)-2-hydroxy-3-oxobutyl phosphate. Residues 150–175 (ALEPEEDDEDEDDEDEDFDDEEDDGR) are disordered. A compositionally biased stretch (acidic residues) spans 152–175 (EPEEDDEDEDDEDEDFDDEEDDGR).

Belongs to the DMRL synthase family.

The catalysed reaction is (2S)-2-hydroxy-3-oxobutyl phosphate + 5-amino-6-(D-ribitylamino)uracil = 6,7-dimethyl-8-(1-D-ribityl)lumazine + phosphate + 2 H2O + H(+). The protein operates within cofactor biosynthesis; riboflavin biosynthesis; riboflavin from 2-hydroxy-3-oxobutyl phosphate and 5-amino-6-(D-ribitylamino)uracil: step 1/2. Catalyzes the formation of 6,7-dimethyl-8-ribityllumazine by condensation of 5-amino-6-(D-ribitylamino)uracil with 3,4-dihydroxy-2-butanone 4-phosphate. This is the penultimate step in the biosynthesis of riboflavin. The chain is 6,7-dimethyl-8-ribityllumazine synthase from Bordetella bronchiseptica (strain ATCC BAA-588 / NCTC 13252 / RB50) (Alcaligenes bronchisepticus).